A 154-amino-acid chain; its full sequence is SsrA-binding protein (154 aa).

Residues 123-142 (AEHDKRHTIKDRDWQREQGR) show a composition bias toward basic and acidic residues. Residues 123–154 (AEHDKRHTIKDRDWQREQGRLMRHKVSAPHKD) are disordered. The span at 143-154 (LMRHKVSAPHKD) shows a compositional bias: basic residues.

It belongs to the SmpB family.

The protein localises to the cytoplasm. Required for rescue of stalled ribosomes mediated by trans-translation. Binds to transfer-messenger RNA (tmRNA), required for stable association of tmRNA with ribosomes. tmRNA and SmpB together mimic tRNA shape, replacing the anticodon stem-loop with SmpB. tmRNA is encoded by the ssrA gene; the 2 termini fold to resemble tRNA(Ala) and it encodes a 'tag peptide', a short internal open reading frame. During trans-translation Ala-aminoacylated tmRNA acts like a tRNA, entering the A-site of stalled ribosomes, displacing the stalled mRNA. The ribosome then switches to translate the ORF on the tmRNA; the nascent peptide is terminated with the 'tag peptide' encoded by the tmRNA and targeted for degradation. The ribosome is freed to recommence translation, which seems to be the essential function of trans-translation. The chain is SsrA-binding protein from Leptothrix cholodnii (strain ATCC 51168 / LMG 8142 / SP-6) (Leptothrix discophora (strain SP-6)).